The primary structure comprises 735 residues: Ion-translocating oxidoreductase complex subunit C (735 aa).

2 4Fe-4S ferredoxin-type domains span residues 368-397 and 407-436; these read MGAP…QQLY and KATA…VQYF. [4Fe-4S] cluster-binding residues include Cys377, Cys380, Cys383, Cys387, Cys416, Cys419, Cys422, and Cys426. Positions 538–715 are disordered; it reads KQAAHPMADS…PADPRKAAVA (178 aa). Residues 556–565 show a composition bias toward low complexity; sequence KAAVEAAIAR.

Belongs to the 4Fe4S bacterial-type ferredoxin family. RnfC subfamily. In terms of assembly, the complex is composed of six subunits: RsxA, RsxB, RsxC, RsxD, RsxE and RsxG. It depends on [4Fe-4S] cluster as a cofactor.

It localises to the cell inner membrane. Functionally, part of a membrane-bound complex that couples electron transfer with translocation of ions across the membrane. Required to maintain the reduced state of SoxR. The chain is Ion-translocating oxidoreductase complex subunit C from Salmonella typhimurium (strain LT2 / SGSC1412 / ATCC 700720).